A 518-amino-acid polypeptide reads, in one-letter code: Sugar transport protein MST3 (518 aa).

The Cytoplasmic portion of the chain corresponds to 1–18 (MAGGAVVSTGAGKDYPGK). Residues 19 to 39 (LTLFVFFTCVVAATGGLIFGY) traverse the membrane as a helical segment. The Extracellular portion of the chain corresponds to 40–80 (DIGISGGVTSMDPFLRKFFPEVYRKKQMADKNNQYCKYDNQ). A helical membrane pass occupies residues 81–101 (LLQTFTSSLYLAALVSSFFAA). Residues 102 to 117 (TVTRVLGRKWSMFAGG) lie on the Cytoplasmic side of the membrane. A helical membrane pass occupies residues 118 to 138 (LTFLIGAALNGAAENVAMLIV). The Extracellular segment spans residues 139-140 (GR). A helical membrane pass occupies residues 141–161 (ILLGVGVGFANQSVPVYLSEM). Residues 162–167 (APARLR) are Cytoplasmic-facing. The chain crosses the membrane as a helical span at residues 168–188 (GMLNIGFQLMITIGILAAELI). At 189–202 (NYGTAKIKAGWGWR) the chain is on the extracellular side. Residues 203–223 (VSLALAAVPAAIITLGSLFLP) form a helical membrane-spanning segment. The Cytoplasmic portion of the chain corresponds to 224-290 (DTPNSLIDRG…YRAQLTMAIC (67 aa)). Residues 291-311 (IPFFQQLTGINVIMFYAPVLF) form a helical membrane-spanning segment. Residues 312–322 (DTLGFKSDASL) are Extracellular-facing. Residues 323-343 (MSAVITGLVNVFATLVSIFTV) traverse the membrane as a helical segment. The Cytoplasmic portion of the chain corresponds to 344 to 351 (DRLGRRKL). Residues 352–372 (FLQGGAQMVVCQVVVGTLIAV) form a helical membrane-spanning segment. Topologically, residues 373 to 387 (KFGTSGIGDIPKGYA) are extracellular. Residues 388-408 (AVVVLFICMYVAGFAWSWGPL) form a helical membrane-spanning segment. The Cytoplasmic portion of the chain corresponds to 409 to 427 (GWLVPSEIFPLEIRPAGQS). Residues 428 to 448 (INVSVNMLFTFVIAQAFLTML) traverse the membrane as a helical segment. The Extracellular segment spans residues 449–452 (CHMK). Residues 453 to 473 (FGLFYFFAGWVVIMTVFIALF) traverse the membrane as a helical segment. Residues 474–518 (LPETKNVPIEEMVLVWKSHWFWRRFIGDHDVHVGANHVSNNKLQP) are Cytoplasmic-facing.

It belongs to the major facilitator superfamily. Sugar transporter (TC 2.A.1.1) family. As to expression, highly expressed in roots. Expressed in xylem and sclerenchyma cells of roots. Expressed at low levels in leaves.

Its subcellular location is the membrane. In terms of biological role, mediates active uptake of hexoses by sugar:proton symport. Can transport glucose, xylose and 3-O-methylglucose. May be involved in the accumulation of monosaccharides required for cell wall synthesis during root development. This is Sugar transport protein MST3 from Oryza sativa subsp. japonica (Rice).